Reading from the N-terminus, the 348-residue chain is 4-hydroxy-3-methylbut-2-en-1-yl diphosphate synthase (flavodoxin) (348 aa).

[4Fe-4S] cluster is bound by residues Cys-263, Cys-266, Cys-298, and Glu-305.

It belongs to the IspG family. The cofactor is [4Fe-4S] cluster.

The catalysed reaction is (2E)-4-hydroxy-3-methylbut-2-enyl diphosphate + oxidized [flavodoxin] + H2O + 2 H(+) = 2-C-methyl-D-erythritol 2,4-cyclic diphosphate + reduced [flavodoxin]. The protein operates within isoprenoid biosynthesis; isopentenyl diphosphate biosynthesis via DXP pathway; isopentenyl diphosphate from 1-deoxy-D-xylulose 5-phosphate: step 5/6. Converts 2C-methyl-D-erythritol 2,4-cyclodiphosphate (ME-2,4cPP) into 1-hydroxy-2-methyl-2-(E)-butenyl 4-diphosphate. The chain is 4-hydroxy-3-methylbut-2-en-1-yl diphosphate synthase (flavodoxin) from Dehalococcoides mccartyi (strain ATCC BAA-2100 / JCM 16839 / KCTC 5957 / BAV1).